The chain runs to 251 residues: MFKFLITLEYDGSDFHGWIEQPKTSTIQGELNKAINRVTKNAVFKTIGASKTDTGVHAIDQKVLLDLGFNPKLDLFKKAINKALPETIKVRSIEEVKQDFNIRDVLYKEYSYTINDKEYNILSNRFELNWDFEEIDIDKLQNIFNLFIGEHEFKLFSGLNHKELDSNKITTIREIESIDVKRALDKVVITFKAKGFIRYQIRMIVQSALNCYLNKKISADEIKEKLQGKGNKPPFNAPAKGLKLNKIVFKS.

Aspartate 53 (nucleophile) is an active-site residue. Tyrosine 110 contacts substrate.

Belongs to the tRNA pseudouridine synthase TruA family. In terms of assembly, homodimer.

The enzyme catalyses uridine(38/39/40) in tRNA = pseudouridine(38/39/40) in tRNA. In terms of biological role, formation of pseudouridine at positions 38, 39 and 40 in the anticodon stem and loop of transfer RNAs. This Mesoplasma florum (strain ATCC 33453 / NBRC 100688 / NCTC 11704 / L1) (Acholeplasma florum) protein is tRNA pseudouridine synthase A.